The sequence spans 84 residues: Large ribosomal subunit protein bL27 (84 aa).

Residues 1–24 (MAHKKAGGSSRNGRDSKGQRLGCK) form a disordered region.

It belongs to the bacterial ribosomal protein bL27 family.

This chain is Large ribosomal subunit protein bL27, found in Pelobacter propionicus (strain DSM 2379 / NBRC 103807 / OttBd1).